The primary structure comprises 683 residues: DNA-directed RNA polymerase subunit beta' (683 aa).

Cys69, Cys71, Cys87, and Cys90 together coordinate Zn(2+). The Mg(2+) site is built by Asp489, Asp491, and Asp493.

The protein belongs to the RNA polymerase beta' chain family. RpoC1 subfamily. In terms of assembly, in plastids the minimal PEP RNA polymerase catalytic core is composed of four subunits: alpha, beta, beta', and beta''. When a (nuclear-encoded) sigma factor is associated with the core the holoenzyme is formed, which can initiate transcription. Mg(2+) serves as cofactor. Requires Zn(2+) as cofactor.

It localises to the plastid. The protein localises to the chloroplast. It catalyses the reaction RNA(n) + a ribonucleoside 5'-triphosphate = RNA(n+1) + diphosphate. In terms of biological role, DNA-dependent RNA polymerase catalyzes the transcription of DNA into RNA using the four ribonucleoside triphosphates as substrates. The protein is DNA-directed RNA polymerase subunit beta' of Triticum aestivum (Wheat).